The sequence spans 251 residues: Mediator of RNA polymerase II transcription subunit 7 (251 aa).

Residues 1-38 (MLPGFGAQTVSPFPNPPEYASAYTSDRINNGSAPPPPH) form a disordered region. Residues 22–32 (AYTSDRINNGS) are compositionally biased toward polar residues.

This sequence belongs to the Mediator complex subunit 7 family. Component of the Mediator complex. Interacts with mdt-10 and mdt-21. Interacts with RNA polymerase II.

Its subcellular location is the nucleus. Functionally, component of the Mediator complex, a coactivator involved in the regulated transcription of nearly all RNA polymerase II-dependent genes. Mediator functions as a bridge to convey information from gene-specific regulatory proteins to the basal RNA polymerase II transcription machinery. Mediator is recruited to promoters by direct interactions with regulatory proteins and serves as a scaffold for the assembly of a functional preinitiation complex with RNA polymerase II and the general transcription factors. Required for germ cell development and gonadal growth. This Caenorhabditis elegans protein is Mediator of RNA polymerase II transcription subunit 7 (let-49).